We begin with the raw amino-acid sequence, 56 residues long: Large ribosomal subunit protein bL33c (56 aa).

It belongs to the bacterial ribosomal protein bL33 family.

It localises to the plastid. Its subcellular location is the chloroplast. This Rhodomonas salina (Cryptomonas salina) protein is Large ribosomal subunit protein bL33c.